We begin with the raw amino-acid sequence, 177 residues long: MTSQVRQNFHQDCEAAINRQINLELYASYVYLSMAYYFDRDDQALHNFAKFFKNQSHEEREHAEKLMKVQNQRGGRIFLQDVKKPEKDEWGSGVEALESSLQLEKSVNQSLLDLHKVCSEHNDPHMCDFIETHYLDEQVKSIKELGDWVTNLRRMGAPQNGMAEYLFDKHTLGKEST.

Residues 7 to 156 enclose the Ferritin-like diiron domain; it reads QNFHQDCEAA…DWVTNLRRMG (150 aa). Fe cation contacts are provided by glutamate 24, glutamate 59, histidine 62, glutamate 104, and glutamine 138.

It belongs to the ferritin family. As to quaternary structure, oligomer of 24 subunits. There are at least two types of subunits. The functional molecule forms a roughly spherical shell with a diameter of 12 nm and contains a central cavity into which the insoluble mineral iron core is deposited. In terms of tissue distribution, liver, gonads, head kidney, heart and spleen.

It carries out the reaction 4 Fe(2+) + O2 + 4 H(+) = 4 Fe(3+) + 2 H2O. Its function is as follows. Stores iron in a soluble, non-toxic, readily available form. Important for iron homeostasis. Has ferroxidase activity. Iron is taken up in the ferrous form and deposited as ferric hydroxides after oxidation. In Salmo salar (Atlantic salmon), this protein is Ferritin, heavy subunit.